Here is a 423-residue protein sequence, read N- to C-terminus: tRNA(Ile2) 2-agmatinylcytidine synthetase TiaS (423 aa).

The OB DNA-binding region spans 273–347; it reads VIVYGRVVEE…GINIEKIKIL (75 aa).

It belongs to the TiaS family.

It localises to the cytoplasm. The enzyme catalyses cytidine(34) in tRNA(Ile2) + agmatine + ATP + H2O = 2-agmatinylcytidine(34) in tRNA(Ile2) + AMP + 2 phosphate + 2 H(+). Its function is as follows. ATP-dependent agmatine transferase that catalyzes the formation of 2-agmatinylcytidine (agm2C) at the wobble position (C34) of tRNA(Ile2), converting the codon specificity from AUG to AUA. This Methanocaldococcus jannaschii (strain ATCC 43067 / DSM 2661 / JAL-1 / JCM 10045 / NBRC 100440) (Methanococcus jannaschii) protein is tRNA(Ile2) 2-agmatinylcytidine synthetase TiaS.